The sequence spans 179 residues: Apoptosis regulator Bcl-2 homolog (179 aa).

Positions 76–95 match the BH1 motif; sequence ELFKDLINWGRICGFIVFSA. The short motif at 126–141 is the BH2 element; sequence PWMISHGGQEEFLAFS.

Belongs to the Bcl-2 family. In terms of assembly, interacts with host BECN1 (via BH3 homology domain); this interaction allows the virus to inhibit BECN1, and thus autophagy. Interacts with host BID. Interacts with host BAX.

The protein resides in the host mitochondrion. The protein localises to the host endoplasmic reticulum. Its function is as follows. Suppresses apoptosis in host cell to promote the viral replication. Has the ability to potentially bind to all the members of the proapoptotic Bcl-2 family. Inhibits autophagy by interacting with host Beclin 1 (BECN1). This is Apoptosis regulator Bcl-2 homolog from Ornithodoros (relapsing fever ticks).